Reading from the N-terminus, the 107-residue chain is Frataxin (107 aa).

Belongs to the frataxin family. As to quaternary structure, monomer.

The protein localises to the cytoplasm. Functionally, promotes the assembly and repair of iron-sulfur clusters by delivering Fe(2+) to proteins involved in these pathways. This chain is Frataxin (YFH1), found in Trachipleistophora hominis (Microsporidian parasite).